We begin with the raw amino-acid sequence, 210 residues long: Superoxide dismutase [Mn], mitochondrial (210 aa).

Mn(2+)-binding residues include His29, His77, Asp164, and His168.

It belongs to the iron/manganese superoxide dismutase family. As to quaternary structure, homotetramer. Requires Mn(2+) as cofactor.

It is found in the mitochondrion matrix. The enzyme catalyses 2 superoxide + 2 H(+) = H2O2 + O2. Its function is as follows. Destroys superoxide anion radicals which are normally produced within the cells and which are toxic to biological systems. The protein is Superoxide dismutase [Mn], mitochondrial (sodB) of Aspergillus niger.